A 211-amino-acid polypeptide reads, in one-letter code: Uracil phosphoribosyltransferase (211 aa).

5-phospho-alpha-D-ribose 1-diphosphate-binding positions include arginine 78, arginine 103, and 130-138 (DPMLATGGT). Residues isoleucine 195 and 200–202 (GDA) contribute to the uracil site. Aspartate 201 contacts 5-phospho-alpha-D-ribose 1-diphosphate.

Belongs to the UPRTase family. Requires Mg(2+) as cofactor.

The catalysed reaction is UMP + diphosphate = 5-phospho-alpha-D-ribose 1-diphosphate + uracil. It participates in pyrimidine metabolism; UMP biosynthesis via salvage pathway; UMP from uracil: step 1/1. Allosterically activated by GTP. In terms of biological role, catalyzes the conversion of uracil and 5-phospho-alpha-D-ribose 1-diphosphate (PRPP) to UMP and diphosphate. This is Uracil phosphoribosyltransferase from Streptomyces coelicolor (strain ATCC BAA-471 / A3(2) / M145).